We begin with the raw amino-acid sequence, 257 residues long: 5'-nucleotidase SurE (257 aa).

Residues Asp-15, Asp-16, Ser-46, and Asn-99 each contribute to the a divalent metal cation site.

This sequence belongs to the SurE nucleotidase family. A divalent metal cation is required as a cofactor.

It localises to the cytoplasm. It carries out the reaction a ribonucleoside 5'-phosphate + H2O = a ribonucleoside + phosphate. In terms of biological role, nucleotidase that shows phosphatase activity on nucleoside 5'-monophosphates. The sequence is that of 5'-nucleotidase SurE from Aliivibrio fischeri (strain ATCC 700601 / ES114) (Vibrio fischeri).